An 89-amino-acid polypeptide reads, in one-letter code: Large ribosomal subunit protein bL27 (89 aa).

The disordered stretch occupies residues 1–22; that stretch reads MAQKKAGGSSRNGRDSAGRRLG.

The protein belongs to the bacterial ribosomal protein bL27 family.

The sequence is that of Large ribosomal subunit protein bL27 from Gluconacetobacter diazotrophicus (strain ATCC 49037 / DSM 5601 / CCUG 37298 / CIP 103539 / LMG 7603 / PAl5).